A 31-amino-acid chain; its full sequence is Ranatuerin-2Ca (31 aa).

Cysteine 24 and cysteine 29 are joined by a disulfide.

In terms of tissue distribution, expressed by the skin glands.

It is found in the secreted. Functionally, antibacterial activity against Gram-positive bacterium S.aureus and Gram-negative bacterium E.coli. Has activity against C.albicans. This Lithobates clamitans (Green frog) protein is Ranatuerin-2Ca.